The primary structure comprises 212 residues: uncharacterized protein (212 aa).

Residues Gly53, Glu74, and Asp97 each contribute to the S-adenosyl-L-methionine site.

It belongs to the methyltransferase superfamily. YrrT family.

Functionally, could be a S-adenosyl-L-methionine-dependent methyltransferase. This is an uncharacterized protein from Bacillus cereus (strain ATCC 14579 / DSM 31 / CCUG 7414 / JCM 2152 / NBRC 15305 / NCIMB 9373 / NCTC 2599 / NRRL B-3711).